Reading from the N-terminus, the 187-residue chain is MAQTQLPHDAKAGPTKPEVRAVVRSKLALTDDDHFVEVGSCTGAVTIAAARDAGRVTALERKADRLETTRKNLAANGLADAVELRNAEAPAELPADADALFIGGSRNYDAVLDHAAETGVDRIVMNVSRLEVAGAATQAFRDRDILTEVVQFQVSHGYELAGATSFDSENPVYMLVGSASGDTEADR.

S-adenosyl-L-methionine is bound by residues T15, G39 to G43, E60, and A89.

This sequence belongs to the methyltransferase superfamily. Archaeal-type CbiT family.

It catalyses the reaction Co-precorrin-6B + S-adenosyl-L-methionine = Co-precorrin-7 + S-adenosyl-L-homocysteine + CO2. It functions in the pathway cofactor biosynthesis; adenosylcobalamin biosynthesis; cob(II)yrinate a,c-diamide from sirohydrochlorin (anaerobic route): step 8/10. In terms of biological role, catalyzes the methylation of C-15 in cobalt-precorrin-6B followed by the decarboxylation of C-12 to form cobalt-precorrin-7. This is Probable cobalt-precorrin-6B C(15)-methyltransferase (decarboxylating) from Halobacterium salinarum (strain ATCC 700922 / JCM 11081 / NRC-1) (Halobacterium halobium).